The primary structure comprises 279 residues: uncharacterized protein (279 aa).

The N-terminal stretch at 1–19 is a signal peptide; the sequence is MKLKLYLIPLLASGIILSA. Cys-20 carries N-palmitoyl cysteine lipidation. A lipid anchor (S-diacylglycerol cysteine) is attached at Cys-20.

This sequence belongs to the MG439/MG440 family.

The protein localises to the cell membrane. This is an uncharacterized protein from Mycoplasma pneumoniae (strain ATCC 29342 / M129 / Subtype 1) (Mycoplasmoides pneumoniae).